The sequence spans 199 residues: Large ribosomal subunit protein bL25 (199 aa).

Belongs to the bacterial ribosomal protein bL25 family. CTC subfamily. As to quaternary structure, part of the 50S ribosomal subunit; part of the 5S rRNA/L5/L18/L25 subcomplex. Contacts the 5S rRNA. Binds to the 5S rRNA independently of L5 and L18.

This is one of the proteins that binds to the 5S RNA in the ribosome where it forms part of the central protuberance. This chain is Large ribosomal subunit protein bL25, found in Syntrophobacter fumaroxidans (strain DSM 10017 / MPOB).